Consider the following 55-residue polypeptide: Locustin (55 aa).

Disulfide bonds link Cys5-Cys40, Cys7-Cys36, Cys10-Cys32, and Cys17-Cys54.

Monomer. As to expression, stored in hemocyte granules and secreted into the hemolymph.

It localises to the secreted. Its function is as follows. Has antibacterial activity against Gram-positive bacterium M.luteus. In Locusta migratoria (Migratory locust), this protein is Locustin.